The chain runs to 145 residues: RING-H2 finger protein ATL18 (145 aa).

A signal peptide spans 1 to 29 (MISMLFPRSPLCTAAIVFYTCVCIPLGRL). The segment at 62-105 (CPICLVEFEAEDAVTHLPRCAHLFHINCIEPWLLRGHLTCPLCR) adopts an RING-type; atypical zinc-finger fold. The chain crosses the membrane as a helical span at residues 125–145 (STLYLSIFFFFCIFLHLLGYL).

Belongs to the RING-type zinc finger family. ATL subfamily.

Its subcellular location is the membrane. It catalyses the reaction S-ubiquitinyl-[E2 ubiquitin-conjugating enzyme]-L-cysteine + [acceptor protein]-L-lysine = [E2 ubiquitin-conjugating enzyme]-L-cysteine + N(6)-ubiquitinyl-[acceptor protein]-L-lysine.. The protein operates within protein modification; protein ubiquitination. This is RING-H2 finger protein ATL18 (ATL18) from Arabidopsis thaliana (Mouse-ear cress).